The following is a 66-amino-acid chain: Large ribosomal subunit protein bL31 (66 aa).

The Zn(2+) site is built by cysteine 16, cysteine 18, cysteine 36, and cysteine 39.

Belongs to the bacterial ribosomal protein bL31 family. Type A subfamily. As to quaternary structure, part of the 50S ribosomal subunit. Zn(2+) is required as a cofactor.

In terms of biological role, binds the 23S rRNA. The protein is Large ribosomal subunit protein bL31 of Leptospira biflexa serovar Patoc (strain Patoc 1 / Ames).